The following is a 476-amino-acid chain: tRNA-2-methylthio-N(6)-dimethylallyladenosine synthase (476 aa).

Over residues 1–14 (MTEVVHLHMPEEAR) the composition is skewed to basic and acidic residues. Positions 1–20 (MTEVVHLHMPEEARATQSRD) are disordered. The MTTase N-terminal domain occupies 26–147 (RRYYVWTVGC…APNPIYQLEE (122 aa)). Residues Cys35, Cys71, Cys105, Cys170, Cys174, and Cys177 each contribute to the [4Fe-4S] cluster site. The region spanning 156-390 (DHPPVSVHVP…ERLQEQIAAE (235 aa)) is the Radical SAM core domain. The region spanning 393-453 (ARFLHQTVEV…PWSLQGVLAR (61 aa)) is the TRAM domain.

Belongs to the methylthiotransferase family. MiaB subfamily. As to quaternary structure, monomer. It depends on [4Fe-4S] cluster as a cofactor.

Its subcellular location is the cytoplasm. The catalysed reaction is N(6)-dimethylallyladenosine(37) in tRNA + (sulfur carrier)-SH + AH2 + 2 S-adenosyl-L-methionine = 2-methylsulfanyl-N(6)-dimethylallyladenosine(37) in tRNA + (sulfur carrier)-H + 5'-deoxyadenosine + L-methionine + A + S-adenosyl-L-homocysteine + 2 H(+). Its function is as follows. Catalyzes the methylthiolation of N6-(dimethylallyl)adenosine (i(6)A), leading to the formation of 2-methylthio-N6-(dimethylallyl)adenosine (ms(2)i(6)A) at position 37 in tRNAs that read codons beginning with uridine. The sequence is that of tRNA-2-methylthio-N(6)-dimethylallyladenosine synthase from Roseiflexus sp. (strain RS-1).